The following is a 443-amino-acid chain: Ribulose bisphosphate carboxylase large chain (443 aa).

Residues asparagine 89 and threonine 139 each contribute to the substrate site. Lysine 141 acts as the Proton acceptor in catalysis. Lysine 143 is a binding site for substrate. Positions 167, 169, and 170 each coordinate Mg(2+). Position 167 is an N6-carboxylysine (lysine 167). Histidine 260 serves as the catalytic Proton acceptor. Positions 261, 293, and 345 each coordinate substrate.

This sequence belongs to the RuBisCO large chain family. Type I subfamily. Heterohexadecamer of 8 large chains and 8 small chains; disulfide-linked. The disulfide link is formed within the large subunit homodimers. The cofactor is Mg(2+). The disulfide bond which can form in the large chain dimeric partners within the hexadecamer appears to be associated with oxidative stress and protein turnover.

The protein localises to the plastid. It localises to the chloroplast. The enzyme catalyses 2 (2R)-3-phosphoglycerate + 2 H(+) = D-ribulose 1,5-bisphosphate + CO2 + H2O. It catalyses the reaction D-ribulose 1,5-bisphosphate + O2 = 2-phosphoglycolate + (2R)-3-phosphoglycerate + 2 H(+). Functionally, ruBisCO catalyzes two reactions: the carboxylation of D-ribulose 1,5-bisphosphate, the primary event in carbon dioxide fixation, as well as the oxidative fragmentation of the pentose substrate in the photorespiration process. Both reactions occur simultaneously and in competition at the same active site. The polypeptide is Ribulose bisphosphate carboxylase large chain (Buddleja davidii (Butterfly bush)).